Reading from the N-terminus, the 193-residue chain is MRLCDRDIEAWLDDGRLVITPRPPTERISGATVDVRLGNQFRVFRGHTAPFIDLSGPKDEVSAALDRVMSDEINLPEGEAFFLHPGELALAVTLESVTLPDDLVGWLDGRSSLARLGLMVHVTAHRIDPGWQGRIVLEFYNSGKLPLALRPGMMIGALSFEPLSGPAARPYNRRQDAKYKDQQGAVASRIDKD.

DCTP contacts are provided by residues 110–115, D128, 136–138, Y171, K178, and Q182; these read RSSLAR and VLE. E138 (proton donor/acceptor) is an active-site residue. A disordered region spans residues 169–193; sequence RPYNRRQDAKYKDQQGAVASRIDKD.

It belongs to the dCTP deaminase family. Homotrimer.

It catalyses the reaction dCTP + H2O + H(+) = dUTP + NH4(+). The protein operates within pyrimidine metabolism; dUMP biosynthesis; dUMP from dCTP (dUTP route): step 1/2. Catalyzes the deamination of dCTP to dUTP. This is dCTP deaminase from Pectobacterium carotovorum subsp. carotovorum (strain PC1).